The chain runs to 335 residues: Dihydroorotate dehydrogenase (quinone) (335 aa).

Residues 58–62 (AGADK) and threonine 82 each bind FMN. A substrate-binding site is contributed by lysine 62. A substrate-binding site is contributed by 107–111 (NRNGF). Positions 135 and 168 each coordinate FMN. Asparagine 168 contacts substrate. Serine 171 functions as the Nucleophile in the catalytic mechanism. Asparagine 173 is a substrate binding site. 2 residues coordinate FMN: lysine 213 and glycine 241. 242–243 (NT) is a substrate binding site. FMN contacts are provided by residues glycine 264, glycine 293, and 314 to 315 (YS).

It belongs to the dihydroorotate dehydrogenase family. Type 2 subfamily. As to quaternary structure, monomer. FMN is required as a cofactor.

The protein localises to the cell membrane. It carries out the reaction (S)-dihydroorotate + a quinone = orotate + a quinol. It functions in the pathway pyrimidine metabolism; UMP biosynthesis via de novo pathway; orotate from (S)-dihydroorotate (quinone route): step 1/1. In terms of biological role, catalyzes the conversion of dihydroorotate to orotate with quinone as electron acceptor. The chain is Dihydroorotate dehydrogenase (quinone) from Actinobacillus pleuropneumoniae serotype 5b (strain L20).